The following is a 547-amino-acid chain: Chaperonin GroEL (547 aa).

ATP contacts are provided by residues 30-33, Lys-51, 87-91, Gly-415, 479-481, and Asp-495; these read TLGP, DGTTT, and NAA.

Belongs to the chaperonin (HSP60) family. As to quaternary structure, forms a cylinder of 14 subunits composed of two heptameric rings stacked back-to-back. Interacts with the co-chaperonin GroES.

It is found in the cytoplasm. The catalysed reaction is ATP + H2O + a folded polypeptide = ADP + phosphate + an unfolded polypeptide.. Together with its co-chaperonin GroES, plays an essential role in assisting protein folding. The GroEL-GroES system forms a nano-cage that allows encapsulation of the non-native substrate proteins and provides a physical environment optimized to promote and accelerate protein folding. The polypeptide is Chaperonin GroEL (Pseudomonas savastanoi pv. phaseolicola (strain 1448A / Race 6) (Pseudomonas syringae pv. phaseolicola (strain 1448A / Race 6))).